The primary structure comprises 333 residues: CMP-N-acetylneuraminate-beta-galactosamide-alpha-2,3-sialyltransferase 4 (333 aa).

Residues 1–8 lie on the Cytoplasmic side of the membrane; sequence MTSKSHWK. A helical; Signal-anchor for type II membrane protein transmembrane segment spans residues 9 to 26; the sequence is LLALALVLVVVMVWYSIS. The Lumenal segment spans residues 27 to 333; the sequence is REDRYIEFFY…MGAVKNLTYF (307 aa). N-linked (GlcNAc...) asparagine glycosylation is found at Asn61, Asn131, Asn310, and Asn329. Cysteines 120 and 273 form a disulfide.

It belongs to the glycosyltransferase 29 family. Broadly expressed among tissues with highest levels in the small intestine and colon.

Its subcellular location is the golgi apparatus. The protein localises to the golgi stack membrane. It catalyses the reaction a beta-D-galactosyl-(1-&gt;3)-N-acetyl-beta-D-galactosaminyl derivative + CMP-N-acetyl-beta-neuraminate = an N-acetyl-alpha-neuraminyl-(2-&gt;3)-beta-D-galactosyl-(1-&gt;3)-N-acetyl-beta-D-galactosaminyl derivative + CMP + H(+). The enzyme catalyses a beta-D-galactosyl-(1-&gt;3)-N-acetyl-alpha-D-galactosaminyl derivative + CMP-N-acetyl-beta-neuraminate = an N-acetyl-alpha-neuraminyl-(2-&gt;3)-beta-D-galactosyl-(1-&gt;3)-N-acetyl-alpha-D-galactosaminyl derivative + CMP + H(+). It carries out the reaction a beta-D-galactosyl-(1-&gt;4)-N-acetyl-beta-D-glucosaminyl derivative + CMP-N-acetyl-beta-neuraminate = an N-acetyl-alpha-neuraminyl-(2-&gt;3)-beta-D-galactosyl-(1-&gt;4)-N-acetyl-beta-D-glucosaminyl derivative + CMP + H(+). The catalysed reaction is a ganglioside GM1 (d18:1(4E)) + CMP-N-acetyl-beta-neuraminate = a ganglioside GD1a (d18:1(4E)) + CMP + H(+). It catalyses the reaction a ganglioside GA1 (d18:1(4E)) + CMP-N-acetyl-beta-neuraminate = a ganglioside GM1b (d18:1(4E)) + CMP + H(+). The enzyme catalyses a ganglioside GT1c (d18:1(4E)) + CMP-N-acetyl-beta-neuraminate = a ganglioside GQ1c (d18:1(4E)) + CMP + H(+). It carries out the reaction a neolactoside nLc4Cer + CMP-N-acetyl-beta-neuraminate = a neolactoside IV(3)-alpha-NeuAc-nLc4Cer + CMP + H(+). The catalysed reaction is a neolactoside nLc4Cer(d18:1(4E)) + CMP-N-acetyl-beta-neuraminate = a neolactoside IV(3)-alpha-NeuAc-nLc4Cer(d18:1(4E)) + CMP + H(+). Its pathway is protein modification; protein glycosylation. Its function is as follows. A beta-galactoside alpha2-3 sialyltransferase involved in terminal sialylation of glycoproteins and glycolipids. Catalyzes the transfer of sialic acid (N-acetyl-neuraminic acid; Neu5Ac) from the nucleotide sugar donor CMP-Neu5Ac onto acceptor Galbeta-(1-&gt;3)-GalNAc- and Galbeta-(1-&gt;4)-GlcNAc-terminated glycoconjugates through an alpha2-3 linkage. Plays a major role in hemostasis. Responsible for sialylation of plasma VWF/von Willebrand factor, preventing its recognition by asialoglycoprotein receptors (ASGPR) and subsequent clearance. Regulates ASGPR-mediated clearance of platelets. Participates in the biosynthesis of the sialyl Lewis X epitopes, both on O- and N-glycans, which are recognized by SELE/E-selectin, SELP/P-selectin and SELL/L-selectin. Essential for selectin-mediated rolling and adhesion of leukocytes during extravasation. Contributes to adhesion and transendothelial migration of neutrophils likely through terminal sialylation of CXCR2. In glycosphingolipid biosynthesis, sialylates GM1 and GA1 gangliosides to form GD1a and GM1b, respectively. Metabolizes brain c-series ganglioside GT1c forming GQ1c. Synthesizes ganglioside LM1 (IV3Neu5Ac-nLc4Cer), a major structural component of peripheral nerve myelin. The chain is CMP-N-acetylneuraminate-beta-galactosamide-alpha-2,3-sialyltransferase 4 (St3gal4) from Mus musculus (Mouse).